The sequence spans 320 residues: MASLGAAAEPERSLFGKDGAEACESPEGRRSGRRKRTKIVPVWENKPCGSSRSLVRRIGSHLPLKPCTRACFEALPSPANLYLTDTPMVPTLADIKWIAADDDETYARVRSDTRPLKHKWRPSPLLVMHRNSSVPNLKMKEEKMFCLKKPGLSLNKSSDIQEELSILRSQIARIVAGDSVSSCLGSDSIPVNVDLEATLPDYGPSYQSTTSFVISDITEEDELDVSEYSSASLVDSTISLQRQLETNMSDDDEDSLCLSKSNSFADMMGILKDIHKMKLNRDWSNRNQCLHKEEDPVNLISEVLKQKFALCDPDNVKTND.

Residues 1-37 (MASLGAAAEPERSLFGKDGAEACESPEGRRSGRRKRT) are disordered. A compositionally biased stretch (basic and acidic residues) spans 9 to 30 (EPERSLFGKDGAEACESPEGRR).

It belongs to the MTFR1 family.

Its subcellular location is the mitochondrion outer membrane. In terms of biological role, mitochondrial protein required for adaptation of miochondrial dynamics to metabolic changes. Regulates mitochondrial morphology at steady state and mediates AMPK-dependent stress-induced mitochondrial fragmentation via the control of OPA1 levels. This Xenopus laevis (African clawed frog) protein is Mitochondrial fission regulator 1-like-B (mtfr1l-b).